The chain runs to 194 residues: Lysozyme g (194 aa).

Residues E71 and D84 contribute to the active site.

Belongs to the glycosyl hydrolase 23 family. As to expression, expressed in intestine, liver, spleen, anterior kidney, posterior kidney, heart, gill, muscle and leukocytes.

It catalyses the reaction Hydrolysis of (1-&gt;4)-beta-linkages between N-acetylmuramic acid and N-acetyl-D-glucosamine residues in a peptidoglycan and between N-acetyl-D-glucosamine residues in chitodextrins.. Functionally, has lytic activity against M.lysodeikticus, V.alginolyticus from Epinephelus fario, V.vulnificus from culture water, A.hydrophila from soft-shell turtle, A.hydrophila from goldfish and V.parahaemolyticus, P.fluorescens and V.fluvialis from culture water. This is Lysozyme g from Epinephelus coioides (Orange-spotted grouper).